A 147-amino-acid chain; its full sequence is Hemoglobin subunit gamma (147 aa).

Residues 3 to 147 (HFTAEEKAII…VAIALGHKYH (145 aa)) form the Globin domain. Residues His-64 and His-93 each coordinate heme b.

The protein belongs to the globin family. In terms of assembly, heterotetramer of two alpha chains and two gamma chains in fetal hemoglobin (Hb F). Red blood cells.

Functionally, gamma chains make up the fetal hemoglobin F, in combination with alpha chains. This Cephalopachus bancanus (Western tarsier) protein is Hemoglobin subunit gamma (HBG).